Consider the following 221-residue polypeptide: Ependymin (221 aa).

Residues 1-21 (MQAFAVAALSIWLCLGATTLA) form the signal peptide. N-linked (GlcNAc...) asparagine glycosylation is found at asparagine 37, asparagine 77, and asparagine 101.

This sequence belongs to the ependymin family. As to quaternary structure, forms disulfide-linked dimers. Post-translationally, binds calcium through the terminal sialic acids. As to expression, EPDs are synthesized in the meninx and secreted in the cerebrospinal fluid.

It localises to the secreted. In terms of biological role, may play a role in neural plasticity. May be involved during axon regeneration. This is Ependymin (epd) from Esox lucius (Northern pike).